We begin with the raw amino-acid sequence, 362 residues long: Protein-glutamate methylesterase/protein-glutamine glutaminase (362 aa).

Residues 5 to 122 form the Response regulatory domain; that stretch reads KVLCVDDSAL…RDGMLDYSEK (118 aa). Asp-56 is subject to 4-aspartylphosphate. The CheB-type methylesterase domain occupies 163-355; it reads LLSTEKLIIV…RRVMARLSSM (193 aa). Active-site residues include Ser-175, His-201, and Asp-297.

Belongs to the CheB family. Post-translationally, phosphorylated by CheA. Phosphorylation of the N-terminal regulatory domain activates the methylesterase activity.

The protein localises to the cytoplasm. The enzyme catalyses [protein]-L-glutamate 5-O-methyl ester + H2O = L-glutamyl-[protein] + methanol + H(+). It catalyses the reaction L-glutaminyl-[protein] + H2O = L-glutamyl-[protein] + NH4(+). Involved in chemotaxis. Part of a chemotaxis signal transduction system that modulates chemotaxis in response to various stimuli. Catalyzes the demethylation of specific methylglutamate residues introduced into the chemoreceptors (methyl-accepting chemotaxis proteins or MCP) by CheR. Also mediates the irreversible deamidation of specific glutamine residues to glutamic acid. The protein is Protein-glutamate methylesterase/protein-glutamine glutaminase of Paraburkholderia xenovorans (strain LB400).